Reading from the N-terminus, the 279-residue chain is CDP-paratose synthase (279 aa).

The Proton acceptor role is filled by Tyr-115.

This sequence belongs to the NAD(P)-dependent epimerase/dehydratase family.

It carries out the reaction CDP-alpha-D-paratose + NADP(+) = CDP-4-dehydro-3,6-dideoxy-alpha-D-glucose + NADPH + H(+). Its pathway is nucleotide-sugar biosynthesis; CDP-3,6-dideoxy-D-mannose biosynthesis; CDP-3,6-dideoxy-D-mannose from CTP and alpha-D-glucose 1-phosphate: step 4/5. Catalyzes synthesis of paratose and tyvelose, unusual 3,6-dideoxyhexose sugars that form part of the O-antigen in the lipopolysaccharides of several enteric bacteria. This Salmonella typhi protein is CDP-paratose synthase (rfbS).